A 260-amino-acid polypeptide reads, in one-letter code: uncharacterized protein (260 aa).

The 159-residue stretch at 8–166 folds into the PNPLA domain; it reads LALGSGGARG…VDRIPVSVVK (159 aa). The short motif at 39 to 43 is the GXSXG element; it reads GSSMG. The active-site Nucleophile is Ser41. The active-site Proton acceptor is Asp153. The DGA/G signature appears at 153–155; sequence DGA.

It belongs to the NTE family.

This is an uncharacterized protein from Bacillus subtilis (strain 168).